The sequence spans 87 residues: Tan_10cys (87 aa).

The N-terminal stretch at 1-21 (MNLKVLFLLAMVLVTLCLGED) is a signal peptide. Positions 22–27 (RVTDRR) are excised as a propeptide.

The protein belongs to the teretoxin C (TC) superfamily. Contains 5 disulfide bonds. As to expression, expressed by the venom duct.

Its subcellular location is the secreted. This Terebra anilis (Auger snail) protein is Tan_10cys.